The primary structure comprises 234 residues: Uridylate kinase (234 aa).

10 to 11 (GS) provides a ligand contact to ATP. Gly-44 contacts UMP. Positions 45 and 49 each coordinate ATP. UMP-binding positions include Asp-66 and 114-120 (ITPAQTT). Thr-140, Tyr-146, and Asp-149 together coordinate ATP.

It belongs to the UMP kinase family. As to quaternary structure, homohexamer.

It localises to the cytoplasm. The enzyme catalyses UMP + ATP = UDP + ADP. The protein operates within pyrimidine metabolism; CTP biosynthesis via de novo pathway; UDP from UMP (UMPK route): step 1/1. With respect to regulation, inhibited by UTP. Functionally, catalyzes the reversible phosphorylation of UMP to UDP. This is Uridylate kinase from Methanoculleus marisnigri (strain ATCC 35101 / DSM 1498 / JR1).